The chain runs to 106 residues: MFDGLDLKNLNLGDMLNQFQDMAKNAQNENASRIFTSKAGGGMVEISINGNSEVVDLKIDDSLLEDKDSLQILLISCMNDVIKQSDENKKMMAMNLMGGLGSFGQK.

It belongs to the YbaB/EbfC family. Homodimer.

The protein resides in the cytoplasm. Its subcellular location is the nucleoid. In terms of biological role, binds to DNA and alters its conformation. May be involved in regulation of gene expression, nucleoid organization and DNA protection. This is Nucleoid-associated protein Abu_0429 from Aliarcobacter butzleri (strain RM4018) (Arcobacter butzleri).